We begin with the raw amino-acid sequence, 88 residues long: Small ribosomal subunit protein uS15 (88 aa).

This sequence belongs to the universal ribosomal protein uS15 family. As to quaternary structure, part of the 30S ribosomal subunit. Forms a bridge to the 50S subunit in the 70S ribosome, contacting the 23S rRNA.

Its function is as follows. One of the primary rRNA binding proteins, it binds directly to 16S rRNA where it helps nucleate assembly of the platform of the 30S subunit by binding and bridging several RNA helices of the 16S rRNA. Functionally, forms an intersubunit bridge (bridge B4) with the 23S rRNA of the 50S subunit in the ribosome. This is Small ribosomal subunit protein uS15 from Verminephrobacter eiseniae (strain EF01-2).